Consider the following 117-residue polypeptide: Conotoxin vil14a (117 aa).

The signal sequence occupies residues 1-22 (MGFRVLVLVVMATTSALPFTFS). A propeptide spanning residues 23–90 (EEPGRSPFRP…FAETPVGQKR (68 aa)) is cleaved from the precursor. The segment at 53 to 86 (RADGQPPDMRQPEMRRPEMRRPEVRQPEFAETPV) is disordered. Residues 62–80 (RQPEMRRPEMRRPEVRQPE) are compositionally biased toward basic and acidic residues. 2 cysteine pairs are disulfide-bonded: C96/C116 and C100/C112.

The protein belongs to the conotoxin R superfamily. As to expression, expressed by the venom duct.

It is found in the secreted. This is Conotoxin vil14a from Conus villepinii (Villepin's cone).